Here is a 162-residue protein sequence, read N- to C-terminus: NADH-quinone oxidoreductase subunit I (162 aa).

2 consecutive 4Fe-4S ferredoxin-type domains span residues 52 to 82 (LRRY…IEAG) and 93 to 122 (TRYD…EGPN). 8 residues coordinate [4Fe-4S] cluster: cysteine 62, cysteine 65, cysteine 68, cysteine 72, cysteine 102, cysteine 105, cysteine 108, and cysteine 112.

This sequence belongs to the complex I 23 kDa subunit family. NDH-1 is composed of 14 different subunits. Subunits NuoA, H, J, K, L, M, N constitute the membrane sector of the complex. The cofactor is [4Fe-4S] cluster.

Its subcellular location is the cell inner membrane. The catalysed reaction is a quinone + NADH + 5 H(+)(in) = a quinol + NAD(+) + 4 H(+)(out). Functionally, NDH-1 shuttles electrons from NADH, via FMN and iron-sulfur (Fe-S) centers, to quinones in the respiratory chain. The immediate electron acceptor for the enzyme in this species is believed to be ubiquinone. Couples the redox reaction to proton translocation (for every two electrons transferred, four hydrogen ions are translocated across the cytoplasmic membrane), and thus conserves the redox energy in a proton gradient. The protein is NADH-quinone oxidoreductase subunit I of Methylocella silvestris (strain DSM 15510 / CIP 108128 / LMG 27833 / NCIMB 13906 / BL2).